A 77-amino-acid polypeptide reads, in one-letter code: Translational regulator CsrA (77 aa).

It belongs to the CsrA/RsmA family. As to quaternary structure, homodimer; the beta-strands of each monomer intercalate to form a hydrophobic core, while the alpha-helices form wings that extend away from the core.

It is found in the cytoplasm. A translational regulator that binds mRNA to regulate translation initiation and/or mRNA stability. Usually binds in the 5'-UTR at or near the Shine-Dalgarno sequence preventing ribosome-binding, thus repressing translation. Its main target seems to be the major flagellin gene, while its function is anatagonized by FliW. The sequence is that of Translational regulator CsrA from Desulfitobacterium hafniense (strain Y51).